The primary structure comprises 500 residues: Probable cytochrome P450 514A2 (500 aa).

The chain crosses the membrane as a helical span at residues 4 to 24; the sequence is IYTIILTIIILVLIISIKDLF. Cys446 contacts heme.

The protein belongs to the cytochrome P450 family. Requires heme as cofactor.

It localises to the membrane. This chain is Probable cytochrome P450 514A2 (cyp514A2), found in Dictyostelium discoideum (Social amoeba).